Here is a 114-residue protein sequence, read N- to C-terminus: MIFYLHITIFLVVCLLMMLFFSLGFQGKKAKEKNSPFECGFDPFSLSRVPFSLKFFFVGIVFLIFDVEIVVILPFPLVMMTKNLMFVFSFTFINFLIVLGLLYEFKYSMLDRLK.

3 consecutive transmembrane segments (helical) span residues 1 to 21 (MIFYLHITIFLVVCLLMMLFF), 55 to 75 (FFFVGIVFLIFDVEIVVILPF), and 85 to 105 (MFVFSFTFINFLIVLGLLYEF).

It belongs to the complex I subunit 3 family.

It is found in the mitochondrion membrane. It catalyses the reaction a ubiquinone + NADH + 5 H(+)(in) = a ubiquinol + NAD(+) + 4 H(+)(out). Core subunit of the mitochondrial membrane respiratory chain NADH dehydrogenase (Complex I) that is believed to belong to the minimal assembly required for catalysis. Complex I functions in the transfer of electrons from NADH to the respiratory chain. The immediate electron acceptor for the enzyme is believed to be ubiquinone. In Rhipicephalus sanguineus (Brown dog tick), this protein is NADH-ubiquinone oxidoreductase chain 3 (ND3).